Reading from the N-terminus, the 2492-residue chain is Talin-A (2492 aa).

Positions arginine 84–arginine 365 constitute an FERM domain. An I/LWEQ domain is found at glutamate 2250 to asparagine 2492.

The protein resides in the cytoplasm. It localises to the cytoskeleton. The protein localises to the cell cortex. In terms of biological role, actin-binding protein that may be involved in the control of cell motility and chemotaxis. This is Talin-A (talA) from Dictyostelium discoideum (Social amoeba).